Reading from the N-terminus, the 208-residue chain is Inosine triphosphate pyrophosphatase (208 aa).

Ala-2 carries the post-translational modification N-acetylalanine. 14–19 provides a ligand contact to ITP; the sequence is TGNAKK. Glu-44 serves as a coordination point for Mg(2+). Residues Lys-56, 72-73, Lys-89, 149-152, Lys-172, and 177-178 contribute to the ITP site; these read DT, FGWD, and HR.

Belongs to the HAM1 NTPase family. Homodimer. Mg(2+) serves as cofactor. The cofactor is Mn(2+).

It localises to the cytoplasm. It carries out the reaction ITP + H2O = IMP + diphosphate + H(+). The enzyme catalyses dITP + H2O = dIMP + diphosphate + H(+). It catalyses the reaction XTP + H2O = XMP + diphosphate + H(+). The catalysed reaction is N(6)-hydroxy-dATP + H2O = N(6)-hydroxy-dAMP + diphosphate + H(+). Functionally, pyrophosphatase that hydrolyzes the non-canonical purine nucleotides inosine triphosphate (ITP), deoxyinosine triphosphate (dITP) as well as 2'-deoxy-N-6-hydroxylaminopurine triphosphate (dHAPTP) and xanthosine 5'-triphosphate (XTP) to their respective monophosphate derivatives. The enzyme does not distinguish between the deoxy- and ribose forms. Probably excludes non-canonical purines from RNA and DNA precursor pools, thus preventing their incorporation into RNA and DNA and avoiding chromosomal lesions. This Bos taurus (Bovine) protein is Inosine triphosphate pyrophosphatase.